A 429-amino-acid polypeptide reads, in one-letter code: Glutamate-1-semialdehyde 2,1-aminomutase (429 aa).

Residue lysine 267 is modified to N6-(pyridoxal phosphate)lysine.

This sequence belongs to the class-III pyridoxal-phosphate-dependent aminotransferase family. HemL subfamily. As to quaternary structure, homodimer. It depends on pyridoxal 5'-phosphate as a cofactor.

The protein localises to the cytoplasm. It catalyses the reaction (S)-4-amino-5-oxopentanoate = 5-aminolevulinate. The protein operates within porphyrin-containing compound metabolism; protoporphyrin-IX biosynthesis; 5-aminolevulinate from L-glutamyl-tRNA(Glu): step 2/2. The protein is Glutamate-1-semialdehyde 2,1-aminomutase of Xanthomonas euvesicatoria pv. vesicatoria (strain 85-10) (Xanthomonas campestris pv. vesicatoria).